The chain runs to 357 residues: Protein RecA (357 aa).

Position 71–78 (71–78 (GPESSGKT)) interacts with ATP.

Belongs to the RecA family.

The protein localises to the cytoplasm. Functionally, can catalyze the hydrolysis of ATP in the presence of single-stranded DNA, the ATP-dependent uptake of single-stranded DNA by duplex DNA, and the ATP-dependent hybridization of homologous single-stranded DNAs. It interacts with LexA causing its activation and leading to its autocatalytic cleavage. The chain is Protein RecA from Ehrlichia chaffeensis (strain ATCC CRL-10679 / Arkansas).